Here is a 163-residue protein sequence, read N- to C-terminus: Endoribonuclease YbeY (163 aa).

The Zn(2+) site is built by His121, His125, and His131.

It belongs to the endoribonuclease YbeY family. The cofactor is Zn(2+).

The protein resides in the cytoplasm. In terms of biological role, single strand-specific metallo-endoribonuclease involved in late-stage 70S ribosome quality control and in maturation of the 3' terminus of the 16S rRNA. The protein is Endoribonuclease YbeY of Synechococcus sp. (strain JA-3-3Ab) (Cyanobacteria bacterium Yellowstone A-Prime).